We begin with the raw amino-acid sequence, 968 residues long: Translation initiation factor IF-2 (968 aa).

A compositionally biased stretch (low complexity) spans 305 to 319 (KPAAAAGAPGAPGAA). The interval 305 to 376 (KPAAAAGAPG…NDRDARPEST (72 aa)) is disordered. A tr-type G domain is found at 468 to 635 (PRAPVVTVMG…QVLLQAEVLE (168 aa)). The tract at residues 477 to 484 (GHVDHGKT) is G1. Residue 477 to 484 (GHVDHGKT) participates in GTP binding. Residues 502–506 (GITQH) are G2. Positions 523 to 526 (DTPG) are G3. GTP is bound by residues 523-527 (DTPGH) and 577-580 (NKID). The segment at 577-580 (NKID) is G4. The G5 stretch occupies residues 613 to 615 (SAR).

This sequence belongs to the TRAFAC class translation factor GTPase superfamily. Classic translation factor GTPase family. IF-2 subfamily.

It localises to the cytoplasm. Functionally, one of the essential components for the initiation of protein synthesis. Protects formylmethionyl-tRNA from spontaneous hydrolysis and promotes its binding to the 30S ribosomal subunits. Also involved in the hydrolysis of GTP during the formation of the 70S ribosomal complex. This chain is Translation initiation factor IF-2, found in Polaromonas sp. (strain JS666 / ATCC BAA-500).